The primary structure comprises 387 residues: Major outer membrane protein P.IA (387 aa).

An N-terminal signal peptide occupies residues 1-19 (MRKKLTALVLSALPLAAVA).

This sequence belongs to the Gram-negative porin family. Homotrimer.

Its subcellular location is the cell outer membrane. In terms of biological role, serves as a slightly cation selective porin. Major antigen on the gonococcal cell surface and it may have pathogenic properties in addition to its porin activity. This chain is Major outer membrane protein P.IA (porA), found in Neisseria meningitidis serogroup C.